We begin with the raw amino-acid sequence, 165 residues long: Ecotin-like protein 4 (165 aa).

Belongs to the protease inhibitor I11 (ecotin) family.

In Trypanosoma brucei brucei (strain 927/4 GUTat10.1), this protein is Ecotin-like protein 4.